A 449-amino-acid polypeptide reads, in one-letter code: Asparagine--tRNA ligase (449 aa).

Belongs to the class-II aminoacyl-tRNA synthetase family. Homodimer.

The protein resides in the cytoplasm. It catalyses the reaction tRNA(Asn) + L-asparagine + ATP = L-asparaginyl-tRNA(Asn) + AMP + diphosphate + H(+). This chain is Asparagine--tRNA ligase, found in Mesomycoplasma hyopneumoniae (strain 232) (Mycoplasma hyopneumoniae).